A 714-amino-acid polypeptide reads, in one-letter code: Calpain-1 catalytic subunit (714 aa).

Residue Ser-2 is modified to N-acetylserine. In terms of domain architecture, Calpain catalytic spans 55 to 354; that stretch reads LFRDEAFPPV…FTRLEICNLT (300 aa). Ca(2+) is bound by residues Gln-109 and Asp-114. Active-site residues include Cys-115, His-272, and Asn-296. Residues Asn-316, Asp-318, and Asp-323 each coordinate Ca(2+). At Thr-354 the chain carries Phosphothreonine. A domain III region spans residues 355 to 526; it reads PDALKSRTIR…KSAGTVELDD (172 aa). Residues 527-542 are linker; the sequence is QIQANLPDEQVLSEEE. EF-hand domains are found at residues 541 to 576, 585 to 618, 615 to 650, and 680 to 714; these read EEID…IISK, FSLE…NRIR, NRIR…AGFK, and VRLE…TMFA. The domain IV stretch occupies residues 543 to 713; that stretch reads IDENFKALFR…LFKWLQLTMF (171 aa). Residues Asp-598, Asp-600, Asn-602, Lys-604, Glu-609, Asp-628, Asp-630, Ser-632, Ser-634, and Glu-639 each coordinate Ca(2+).

It belongs to the peptidase C2 family. In terms of assembly, forms a heterodimer with a small (regulatory) subunit CAPNS1. Ca(2+) is required as a cofactor. In terms of processing, undergoes calcium-induced successive autoproteolytic cleavages that generate a membrane-bound 78 kDa active form and an intracellular 75 kDa active form. Calpastatin reduces with high efficiency the transition from 78 kDa to 75 kDa calpain forms. As to expression, ubiquitous.

Its subcellular location is the cytoplasm. The protein localises to the cell membrane. It catalyses the reaction Broad endopeptidase specificity.. With respect to regulation, activated by micromolar concentrations of calcium and inhibited by calpastatin. Its function is as follows. Calcium-regulated non-lysosomal thiol-protease which catalyzes limited proteolysis of substrates involved in cytoskeletal remodeling and signal transduction. Proteolytically cleaves CTBP1 at 'Asn-375', 'Gly-387' and 'His-409'. Cleaves and activates caspase-7 (CASP7). This Homo sapiens (Human) protein is Calpain-1 catalytic subunit.